The chain runs to 127 residues: Small ribosomal subunit protein uS11 (127 aa).

Belongs to the universal ribosomal protein uS11 family. As to quaternary structure, part of the 30S ribosomal subunit.

Located on the platform of the 30S subunit. This chain is Small ribosomal subunit protein uS11, found in Natronomonas pharaonis (strain ATCC 35678 / DSM 2160 / CIP 103997 / JCM 8858 / NBRC 14720 / NCIMB 2260 / Gabara) (Halobacterium pharaonis).